The following is a 327-amino-acid chain: MDKETNDNEYRRQSEHRTSAPKRKKKKKIRKLPIILLIVVILLIALVVYIVHSYNSGVEYAKKHAKDVKVHQFNGPVKNDGKISILVLGADKAQGGQSRTDSIMVVQYDFINKKMKMMSVMRDIYADIPGYGKHKINSAYALGGPKLLRKTLDKNLGINPEYYAVVDFTGFEKMIDELMPEGVPINVEKDMSKNIGVSLKKGNHRLNGKELLGYARFRHDPEGDFGRVRRQQQVMQTLKKEMVNFRTVVKLPKVAGILRGYVNTNIPDSGIFQTGLSFGIRGEKDVKSLTVPIKNSYEDVNTNTDGSALQINKNTNKQAIKDFLDED.

Residues 1-18 show a composition bias toward basic and acidic residues; sequence MDKETNDNEYRRQSEHRT. Positions 1-24 are disordered; the sequence is MDKETNDNEYRRQSEHRTSAPKRK. At 1 to 31 the chain is on the cytoplasmic side; sequence MDKETNDNEYRRQSEHRTSAPKRKKKKKIRK. Residues 32 to 52 traverse the membrane as a helical; Signal-anchor for type II membrane protein segment; the sequence is LPIILLIVVILLIALVVYIVH. The Extracellular portion of the chain corresponds to 53–327; that stretch reads SYNSGVEYAK…QAIKDFLDED (275 aa).

Belongs to the LytR/CpsA/Psr (LCP) family.

It localises to the cell membrane. Functionally, involved in SarA attenuation. Affects resistance to oxacillin and teicoplanin, as well as the synthesis of virulence factors. The chain is Regulatory protein MsrR (msrR) from Staphylococcus aureus (strain Mu50 / ATCC 700699).